A 95-amino-acid chain; its full sequence is uncharacterized protein (95 aa).

The interval 66 to 95 is disordered; sequence EERGRLRGTEGPSRPPSSGAGDPRGATTLG.

It belongs to the herpesviridae UL91 family.

This is an uncharacterized protein from Equine herpesvirus 2 (strain 86/87) (EHV-2).